A 452-amino-acid polypeptide reads, in one-letter code: Plasminogen-binding protein PgbA (452 aa).

Positions 265–452 are disordered; it reads QEAIKEPKKA…RRKALEAGKK (188 aa). 2 stretches are compositionally biased toward basic and acidic residues: residues 284-310 and 317-373; these read LEEKNYQKAERKLDAKEERRYLRDERK and KAME…KEPS. The segment covering 374–391 has biased composition (polar residues); the sequence is DGNNATQQGEKQNAPKEN. The span at 392–452 shows a compositional bias: basic and acidic residues; it reads NAQKEENKPN…RRKALEAGKK (61 aa).

It is found in the cell surface. In terms of biological role, binds plasminogen, specifically, and in a concentration and lysine-dependent manner. Plasminogen is the precursor of plasmin, a serine protease that cleaves fibrin, fibronectin, laminin and vitronectin. Acquisition of plasminogen/plasmin could enable H.pylori to degrade host components. The polypeptide is Plasminogen-binding protein PgbA (pgbA) (Helicobacter pylori (strain ATCC 700392 / 26695) (Campylobacter pylori)).